Consider the following 599-residue polypeptide: Purine-uracil permease NCS1 (599 aa).

12 helical membrane-spanning segments follow: residues 140–160 (LWIG…LVDL), 164–184 (WWQG…PLVL), 218–238 (LVGC…IFLL), 257–277 (TSPL…CIVW), 293–313 (ILIS…GGFG), 327–347 (FWTL…TLAL), 363–383 (IIGQ…GVAV), 411–433 (TLLA…NVVA), 445–465 (FFTF…FQPW), 474–494 (FVYT…GIIL), 525–545 (YNVA…PGFL), and 560–580 (VVYD…YWII).

It belongs to the purine-cytosine permease (2.A.39) family. Expressed in roots, leaves, stems, flowers, siliques and seeds.

It localises to the plastid. Its subcellular location is the chloroplast envelope. The protein localises to the chloroplast membrane. In terms of biological role, nucleobase-proton symporter that facilitates the uptake of nucleobases in the cells. Can transport adenine, guanine and uracil. Contributes to uracil import into plastids for plastidic uracil salvage which is essential for plant growth and development. The protein is Purine-uracil permease NCS1 of Arabidopsis thaliana (Mouse-ear cress).